The following is a 336-amino-acid chain: C2H2 finger domain transcription factor mtfA (336 aa).

Residues M1–S245 are disordered. 2 stretches are compositionally biased toward polar residues: residues I7 to S29 and E36 to T56. Over residues S136–A149 the composition is skewed to low complexity. Over residues T168–H181 the composition is skewed to polar residues. The segment covering A182–A210 has biased composition (low complexity). The span at P216 to S245 shows a compositional bias: polar residues. 2 consecutive C2H2-type zinc fingers follow at residues Y272–H294 and F300–H325.

It is found in the nucleus. In terms of biological role, transcription factor that controls morphogenesis and virulence. Acts as a positive regulator of gliotixin and protease production. The chain is C2H2 finger domain transcription factor mtfA from Aspergillus fumigatus (strain CBS 144.89 / FGSC A1163 / CEA10) (Neosartorya fumigata).